Here is a 313-residue protein sequence, read N- to C-terminus: Homoserine O-acetyltransferase (313 aa).

Cys142 (acyl-thioester intermediate) is an active-site residue. Residues Lys163 and Ser191 each coordinate substrate. His234 acts as the Proton acceptor in catalysis. The active site involves Glu236. Arg248 serves as a coordination point for substrate.

The protein belongs to the MetA family.

The protein localises to the cytoplasm. It carries out the reaction L-homoserine + acetyl-CoA = O-acetyl-L-homoserine + CoA. It participates in amino-acid biosynthesis; L-methionine biosynthesis via de novo pathway; O-acetyl-L-homoserine from L-homoserine: step 1/1. Functionally, transfers an acetyl group from acetyl-CoA to L-homoserine, forming acetyl-L-homoserine. The polypeptide is Homoserine O-acetyltransferase (Streptococcus gordonii (strain Challis / ATCC 35105 / BCRC 15272 / CH1 / DL1 / V288)).